Here is a 359-residue protein sequence, read N- to C-terminus: MLSLQNQRQPKTTPLTDDYVTSNTVLGYGINGKVVQCTHRRTQQNYALKVLLDSERARREVDLHWRVSGCRYIVNIIDVYENTFKDRKCLLVVMECMEGGELFQRIQDKADGAFTEREAAQIMHEICAAVDYLHSRDIAHRDLKPENLLYTTTQPNATLKLTDFGFAKETFTSYTLQTPCYTPYYVAPEVLGPEKYDKSCDIWSLGVVMYIIMCGFPPFYSNHGLAISPGMKNRIRTGQYDFPDPEWTNVSQAAKDLIKGMLNVDPSKRLRIQDVISNKWIAQYNAVPQTPLCTGRMLKEAEETWPEVQEEMTRSLATMRVDYDQMQIKALDKSNNPLLTKRRKKIEEMELYMANATRN.

The Protein kinase domain occupies 20–281 (VTSNTVLGYG…IQDVISNKWI (262 aa)). Residues 26 to 34 (LGYGINGKV) and Lys49 each bind ATP. Asp142 acts as the Proton acceptor in catalysis.

The protein belongs to the protein kinase superfamily. CAMK Ser/Thr protein kinase family. Phosphorylated and activated by MAP kinase.

It catalyses the reaction L-seryl-[protein] + ATP = O-phospho-L-seryl-[protein] + ADP + H(+). It carries out the reaction L-threonyl-[protein] + ATP = O-phospho-L-threonyl-[protein] + ADP + H(+). In terms of biological role, its physiological substrate seems to be the small heat shock protein (HSP27/HSP25). This chain is MAP kinase-activated protein kinase 2 (MAPk-Ak2), found in Drosophila melanogaster (Fruit fly).